Consider the following 289-residue polypeptide: Thymidylate synthase (289 aa).

Residues Arg26 and 151 to 152 (RR) each bind dUMP. Cys171 (nucleophile) is an active-site residue. Residues 191 to 194 (RSGD), Asn202, and 232 to 234 (HVY) contribute to the dUMP site. Asp194 serves as a coordination point for (6R)-5,10-methylene-5,6,7,8-tetrahydrofolate. Position 288 (Ala288) interacts with (6R)-5,10-methylene-5,6,7,8-tetrahydrofolate.

This sequence belongs to the thymidylate synthase family. In terms of assembly, homodimer.

It catalyses the reaction dUMP + (6R)-5,10-methylene-5,6,7,8-tetrahydrofolate = 7,8-dihydrofolate + dTMP. It participates in pyrimidine metabolism; dTTP biosynthesis. This is Thymidylate synthase from Equus caballus (Horse).